A 133-amino-acid chain; its full sequence is Nucleoid-associated protein Mb3743c (133 aa).

Residues 98–133 (GAMRPPAPPAAPPGAPGMPGMPGMPGAPGAPPVPGI) form a disordered region. The span at 102-113 (PPAPPAAPPGAP) shows a compositional bias: pro residues.

The protein belongs to the YbaB/EbfC family. As to quaternary structure, homodimer.

The protein localises to the cytoplasm. It localises to the nucleoid. Its function is as follows. Binds to DNA and alters its conformation. May be involved in regulation of gene expression, nucleoid organization and DNA protection. The chain is Nucleoid-associated protein Mb3743c from Mycobacterium bovis (strain ATCC BAA-935 / AF2122/97).